The following is a 313-amino-acid chain: Protein-methionine-sulfoxide reductase catalytic subunit MsrP (313 aa).

Positions 1–46 (MPSYRAPKIAAAEITPERFFLDRRTFIAAAAGSLALSVPKPSRAAA) form a signal peptide, tat-type signal. Mo-molybdopterin-binding positions include Asn-70, 73–74 (YE), Cys-127, Thr-162, Asn-212, Arg-217, and 228–230 (GIK).

The protein belongs to the MsrP family. Heterodimer of a catalytic subunit (MsrP) and a heme-binding subunit (MsrQ). Mo-molybdopterin serves as cofactor. Post-translationally, predicted to be exported by the Tat system. The position of the signal peptide cleavage has not been experimentally proven.

The protein resides in the periplasm. The catalysed reaction is L-methionyl-[protein] + a quinone + H2O = L-methionyl-(S)-S-oxide-[protein] + a quinol. It carries out the reaction L-methionyl-[protein] + a quinone + H2O = L-methionyl-(R)-S-oxide-[protein] + a quinol. Its function is as follows. Part of the MsrPQ system that repairs oxidized periplasmic proteins containing methionine sulfoxide residues (Met-O), using respiratory chain electrons. Thus protects these proteins from oxidative-stress damage caused by reactive species of oxygen and chlorine generated by the host defense mechanisms. MsrPQ is essential for the maintenance of envelope integrity under bleach stress, rescuing a wide series of structurally unrelated periplasmic proteins from methionine oxidation. The catalytic subunit MsrP is non-stereospecific, being able to reduce both (R-) and (S-) diastereoisomers of methionine sulfoxide. The polypeptide is Protein-methionine-sulfoxide reductase catalytic subunit MsrP (Rhizobium meliloti (strain 1021) (Ensifer meliloti)).